A 306-amino-acid chain; its full sequence is Curved DNA-binding protein (306 aa).

Residues 5-69 (DYYAIMGVKP…QRRAEYDQLW (65 aa)) form the J domain.

It localises to the cytoplasm. The protein resides in the nucleoid. DNA-binding protein that preferentially recognizes a curved DNA sequence. It is probably a functional analog of DnaJ; displays overlapping activities with DnaJ, but functions under different conditions, probably acting as a molecular chaperone in an adaptive response to environmental stresses other than heat shock. Lacks autonomous chaperone activity; binds native substrates and targets them for recognition by DnaK. Its activity is inhibited by the binding of CbpM. The polypeptide is Curved DNA-binding protein (Citrobacter koseri (strain ATCC BAA-895 / CDC 4225-83 / SGSC4696)).